An 801-amino-acid chain; its full sequence is H(+)/Cl(-) exchange transporter 3 (801 aa).

Over 1 to 125 the chain is Cytoplasmic; it reads MESEQLFHRG…WEMTKSLYDA (125 aa). 3 consecutive short sequence motifs (di-leucine internalization motif; mediates targeting to late endosome and lysosome membranes) follow at residues 28 to 29, 46 to 47, and 71 to 75; these read LL and LLDLL. Residues 126–163 form a helical membrane-spanning segment; it reads WSGWLVVTLTGLASGALAGLIDIAADWMTDLKEGICLS. Asparagine 177 carries an N-linked (GlcNAc...) asparagine glycan. The chain crosses the membrane as a helical span at residues 209–232; sequence MNYIMYIFWALSFAFLAVSLVKVF. A Selectivity filter part_1 motif is present at residues 238–242; the sequence is GSGIP. Position 239 (serine 239) interacts with chloride. An intramembrane region (helical) is located at residues 241-248; the sequence is IPEIKTIL. Helical transmembrane passes span 258 to 276 and 282 to 301; these read GKWT…VASG and EGPL…YLFP. Positions 280–284 match the Selectivity filter part_2 motif; sequence GKEGP. 2 intramembrane regions (helical) span residues 313-325 and 329-337; these read VLSA…VSVA and PIGGVLFSL. 3 helical membrane passes run 349 to 367, 391 to 416, and 423 to 443; these read LWRS…RSIN, FPFI…AWCR, and FGKY…VIAF. N-linked (GlcNAc...) asparagine glycosylation is found at asparagine 451 and asparagine 479. The chain crosses the membrane as a helical span at residues 500–520; that stretch reads IWQLCLALIFKIIMTVFTFGI. The Selectivity filter part_3 motif lies at 525–529; that stretch reads GLFIP. Position 527 (phenylalanine 527) interacts with chloride. Intramembrane regions (helical) lie at residues 555 to 569 and 573 to 584; these read GLYA…LGGV and TVSLVVIVFELT. The note=Loop between two helices intramembrane region spans 585–588; that stretch reads GGLE. Residues 589–607 traverse the membrane as a helical segment; the sequence is YIVPLMAAVMTSKWVGDAF. The Cytoplasmic segment spans residues 608 to 801; sequence GREGIYEAHI…NQDPASIMFN (194 aa). Position 613 (tyrosine 613) interacts with chloride. CBS domains lie at 641-705 and 738-795; these read MRPR…ARKK and LDMS…NQDP. Residues 672–674 and 779–782 each bind ATP; these read YNG and TKKD.

It belongs to the chloride channel (TC 2.A.49) family. ClC-3/CLCN3 subfamily. As to quaternary structure, monomer and homodimer. Forms heterodimers with CLCN4. In terms of processing, N-glycosylated.

It is found in the early endosome membrane. Its subcellular location is the late endosome membrane. The protein localises to the lysosome membrane. It localises to the cell membrane. Its function is as follows. Strongly outwardly rectifying, electrogenic H(+)/Cl(-)exchanger which mediates the exchange of chloride ions against protons. The CLC channel family contains both chloride channels and proton-coupled anion transporters that exchange chloride or another anion for protons. The presence of conserved gating glutamate residues is typical for family members that function as antiporters. The chain is H(+)/Cl(-) exchange transporter 3 (CLCN3) from Pongo abelii (Sumatran orangutan).